The primary structure comprises 183 residues: Threonylcarbamoyl-AMP synthase (183 aa).

Residues 1-183 (MNIQQIVEQL…LFTHQLFRQG (183 aa)) form the YrdC-like domain.

Belongs to the SUA5 family. TsaC subfamily.

Its subcellular location is the cytoplasm. It carries out the reaction L-threonine + hydrogencarbonate + ATP = L-threonylcarbamoyladenylate + diphosphate + H2O. Its function is as follows. Required for the formation of a threonylcarbamoyl group on adenosine at position 37 (t(6)A37) in tRNAs that read codons beginning with adenine. Catalyzes the conversion of L-threonine, HCO(3)(-)/CO(2) and ATP to give threonylcarbamoyl-AMP (TC-AMP) as the acyladenylate intermediate, with the release of diphosphate. The polypeptide is Threonylcarbamoyl-AMP synthase (Pasteurella multocida (strain Pm70)).